A 268-amino-acid polypeptide reads, in one-letter code: Glucosamine-6-phosphate deaminase (268 aa).

The Proton acceptor; for enolization step role is filled by D67. N137 acts as the For ring-opening step in catalysis. H139 serves as the catalytic Proton acceptor; for ring-opening step. E144 functions as the For ring-opening step in the catalytic mechanism.

This sequence belongs to the glucosamine/galactosamine-6-phosphate isomerase family. NagB subfamily. Homohexamer.

The enzyme catalyses alpha-D-glucosamine 6-phosphate + H2O = beta-D-fructose 6-phosphate + NH4(+). It participates in amino-sugar metabolism; N-acetylneuraminate degradation; D-fructose 6-phosphate from N-acetylneuraminate: step 5/5. Catalyzes the reversible isomerization-deamination of glucosamine 6-phosphate (GlcN6P) to form fructose 6-phosphate (Fru6P) and ammonium ion. This chain is Glucosamine-6-phosphate deaminase, found in Colwellia psychrerythraea (strain 34H / ATCC BAA-681) (Vibrio psychroerythus).